The primary structure comprises 264 residues: uncharacterized protein (264 aa).

A run of 6 helical transmembrane segments spans residues 23–43 (LIFL…TALI), 59–79 (FDTF…YYFL), 91–111 (LVLS…FYAL), 150–170 (FSEL…VGLL), 190–210 (AGIY…LNVW), and 233–253 (WIWS…LFVI).

It is found in the cell membrane. This is an uncharacterized protein from Mycoplasma genitalium (strain ATCC 33530 / DSM 19775 / NCTC 10195 / G37) (Mycoplasmoides genitalium).